Here is a 493-residue protein sequence, read N- to C-terminus: Ketol-acid reductoisomerase (NADP(+)) (493 aa).

Positions 14–208 constitute a KARI N-terminal Rossmann domain; sequence LDQLGRCRFM…GGHRAGVLES (195 aa). Residues 45-48, arginine 68, arginine 76, serine 78, and 108-110 contribute to the NADP(+) site; these read CGAQ and DKQ. The active site involves histidine 132. Position 158 (glycine 158) interacts with NADP(+). KARI C-terminal knotted domains follow at residues 209-345 and 346-486; these read SFVA…APKG and ENIK…MTDM. Residues aspartate 217, glutamate 221, glutamate 390, and glutamate 394 each coordinate Mg(2+). Serine 415 contacts substrate.

Belongs to the ketol-acid reductoisomerase family. Mg(2+) serves as cofactor.

The enzyme catalyses (2R)-2,3-dihydroxy-3-methylbutanoate + NADP(+) = (2S)-2-acetolactate + NADPH + H(+). The catalysed reaction is (2R,3R)-2,3-dihydroxy-3-methylpentanoate + NADP(+) = (S)-2-ethyl-2-hydroxy-3-oxobutanoate + NADPH + H(+). It functions in the pathway amino-acid biosynthesis; L-isoleucine biosynthesis; L-isoleucine from 2-oxobutanoate: step 2/4. It participates in amino-acid biosynthesis; L-valine biosynthesis; L-valine from pyruvate: step 2/4. Involved in the biosynthesis of branched-chain amino acids (BCAA). Catalyzes an alkyl-migration followed by a ketol-acid reduction of (S)-2-acetolactate (S2AL) to yield (R)-2,3-dihydroxy-isovalerate. In the isomerase reaction, S2AL is rearranged via a Mg-dependent methyl migration to produce 3-hydroxy-3-methyl-2-ketobutyrate (HMKB). In the reductase reaction, this 2-ketoacid undergoes a metal-dependent reduction by NADPH to yield (R)-2,3-dihydroxy-isovalerate. The polypeptide is Ketol-acid reductoisomerase (NADP(+)) (Histophilus somni (strain 129Pt) (Haemophilus somnus)).